Consider the following 22-residue polypeptide: Peroxidase 5 (22 aa).

Belongs to the peroxidase family. Classical plant (class III) peroxidase subfamily. It depends on heme b as a cofactor. Ca(2+) is required as a cofactor.

Its subcellular location is the secreted. The protein resides in the cell wall. It catalyses the reaction 2 a phenolic donor + H2O2 = 2 a phenolic radical donor + 2 H2O. In terms of biological role, removal of H(2)O(2), oxidation of toxic reductants, biosynthesis and degradation of lignin, suberization, auxin catabolism, response to environmental stresses such as wounding, pathogen attack and oxidative stress. These functions might be dependent on each isozyme/isoform in each plant tissue. This Cycas revoluta (Sago palm) protein is Peroxidase 5.